We begin with the raw amino-acid sequence, 438 residues long: Trigger factor (438 aa).

The 86-residue stretch at 160-245 (DDKVVIDFVG…VKKIQEAQLP (86 aa)) folds into the PPIase FKBP-type domain.

The protein belongs to the FKBP-type PPIase family. Tig subfamily.

Its subcellular location is the cytoplasm. The enzyme catalyses [protein]-peptidylproline (omega=180) = [protein]-peptidylproline (omega=0). Its function is as follows. Involved in protein export. Acts as a chaperone by maintaining the newly synthesized protein in an open conformation. Functions as a peptidyl-prolyl cis-trans isomerase. The polypeptide is Trigger factor (Francisella philomiragia subsp. philomiragia (strain ATCC 25017 / CCUG 19701 / FSC 153 / O#319-036)).